The chain runs to 600 residues: Aspartate--tRNA(Asp/Asn) ligase (600 aa).

Glu187 is a binding site for L-aspartate. The interval 211 to 214 is aspartate; that stretch reads QIFK. L-aspartate is bound by residues Arg233 and His463. 233 to 235 contacts ATP; it reads RDE. Glu497 provides a ligand contact to ATP. An L-aspartate-binding site is contributed by Arg504. An ATP-binding site is contributed by 549–552; it reads GIDR.

The protein belongs to the class-II aminoacyl-tRNA synthetase family. Type 1 subfamily. As to quaternary structure, homodimer.

It is found in the cytoplasm. The catalysed reaction is tRNA(Asx) + L-aspartate + ATP = L-aspartyl-tRNA(Asx) + AMP + diphosphate. Its function is as follows. Aspartyl-tRNA synthetase with relaxed tRNA specificity since it is able to aspartylate not only its cognate tRNA(Asp) but also tRNA(Asn). Reaction proceeds in two steps: L-aspartate is first activated by ATP to form Asp-AMP and then transferred to the acceptor end of tRNA(Asp/Asn). The chain is Aspartate--tRNA(Asp/Asn) ligase from Wolbachia sp. subsp. Brugia malayi (strain TRS).